Here is a 327-residue protein sequence, read N- to C-terminus: tRNA uridine(34) hydroxylase (327 aa).

The Rhodanese domain maps to 123–217; that stretch reads SDPEVLLVDT…YLEEVKLEES (95 aa). Catalysis depends on C177, which acts as the Cysteine persulfide intermediate.

The protein belongs to the TrhO family.

The catalysed reaction is uridine(34) in tRNA + AH2 + O2 = 5-hydroxyuridine(34) in tRNA + A + H2O. Catalyzes oxygen-dependent 5-hydroxyuridine (ho5U) modification at position 34 in tRNAs. This Shewanella pealeana (strain ATCC 700345 / ANG-SQ1) protein is tRNA uridine(34) hydroxylase.